A 769-amino-acid chain; its full sequence is Neutral alpha-glucosidase C (769 aa).

The Nucleophile role is filled by aspartate 366. Glutamate 369 is a catalytic residue. Aspartate 442 serves as the catalytic Proton donor.

It belongs to the glycosyl hydrolase 31 family.

The catalysed reaction is Hydrolysis of terminal, non-reducing (1-&gt;4)-linked alpha-D-glucose residues with release of alpha-D-glucose.. Functionally, has alpha-glucosidase activity. In Macaca fascicularis (Crab-eating macaque), this protein is Neutral alpha-glucosidase C (GANC).